A 140-amino-acid polypeptide reads, in one-letter code: Ribonuclease P protein component (140 aa).

This sequence belongs to the RnpA family. As to quaternary structure, consists of a catalytic RNA component (M1 or rnpB) and a protein subunit.

It carries out the reaction Endonucleolytic cleavage of RNA, removing 5'-extranucleotides from tRNA precursor.. Functionally, RNaseP catalyzes the removal of the 5'-leader sequence from pre-tRNA to produce the mature 5'-terminus. It can also cleave other RNA substrates such as 4.5S RNA. The protein component plays an auxiliary but essential role in vivo by binding to the 5'-leader sequence and broadening the substrate specificity of the ribozyme. This is Ribonuclease P protein component from Nostoc sp. (strain PCC 7120 / SAG 25.82 / UTEX 2576).